A 146-amino-acid chain; its full sequence is D-aminoacyl-tRNA deacylase (146 aa).

Positions 137 to 138 (GP) match the Gly-cisPro motif, important for rejection of L-amino acids motif.

It belongs to the DTD family. As to quaternary structure, homodimer.

The protein resides in the cytoplasm. The catalysed reaction is glycyl-tRNA(Ala) + H2O = tRNA(Ala) + glycine + H(+). The enzyme catalyses a D-aminoacyl-tRNA + H2O = a tRNA + a D-alpha-amino acid + H(+). An aminoacyl-tRNA editing enzyme that deacylates mischarged D-aminoacyl-tRNAs. Also deacylates mischarged glycyl-tRNA(Ala), protecting cells against glycine mischarging by AlaRS. Acts via tRNA-based rather than protein-based catalysis; rejects L-amino acids rather than detecting D-amino acids in the active site. By recycling D-aminoacyl-tRNA to D-amino acids and free tRNA molecules, this enzyme counteracts the toxicity associated with the formation of D-aminoacyl-tRNA entities in vivo and helps enforce protein L-homochirality. In Bacillus cereus (strain ATCC 14579 / DSM 31 / CCUG 7414 / JCM 2152 / NBRC 15305 / NCIMB 9373 / NCTC 2599 / NRRL B-3711), this protein is D-aminoacyl-tRNA deacylase.